The following is a 61-amino-acid chain: Large ribosomal subunit protein uL30 (61 aa).

It belongs to the universal ribosomal protein uL30 family. As to quaternary structure, part of the 50S ribosomal subunit.

This Acidithiobacillus ferrooxidans (strain ATCC 23270 / DSM 14882 / CIP 104768 / NCIMB 8455) (Ferrobacillus ferrooxidans (strain ATCC 23270)) protein is Large ribosomal subunit protein uL30.